A 417-amino-acid chain; its full sequence is Serine hydroxymethyltransferase (417 aa).

(6S)-5,6,7,8-tetrahydrofolate is bound by residues Leu120 and 124–126 (GHL). Lys229 bears the N6-(pyridoxal phosphate)lysine mark.

The protein belongs to the SHMT family. As to quaternary structure, homodimer. Pyridoxal 5'-phosphate serves as cofactor.

The protein localises to the cytoplasm. The enzyme catalyses (6R)-5,10-methylene-5,6,7,8-tetrahydrofolate + glycine + H2O = (6S)-5,6,7,8-tetrahydrofolate + L-serine. It functions in the pathway one-carbon metabolism; tetrahydrofolate interconversion. It participates in amino-acid biosynthesis; glycine biosynthesis; glycine from L-serine: step 1/1. In terms of biological role, catalyzes the reversible interconversion of serine and glycine with tetrahydrofolate (THF) serving as the one-carbon carrier. This reaction serves as the major source of one-carbon groups required for the biosynthesis of purines, thymidylate, methionine, and other important biomolecules. Also exhibits THF-independent aldolase activity toward beta-hydroxyamino acids, producing glycine and aldehydes, via a retro-aldol mechanism. The protein is Serine hydroxymethyltransferase of Anaeromyxobacter dehalogenans (strain 2CP-1 / ATCC BAA-258).